The sequence spans 291 residues: Tetrahydromethanopterin:alpha-L-glutamate ligase (291 aa).

The ATP-grasp domain maps to 101-286 (SVFLELNNLP…IADKLLEKII (186 aa)). ATP-binding positions include K136, 175–187 (QEFI…EHRD), and R203. Mg(2+)-binding residues include D247, E259, and N261. 3 residues coordinate Mn(2+): D247, E259, and N261.

The protein belongs to the RimK family. MptN subfamily. Homodimer. Requires Mg(2+) as cofactor. Mn(2+) is required as a cofactor.

The catalysed reaction is 5,6,7,8-tetrahydromethanopterin + L-glutamate + ATP = 5,6,7,8-tetrahydrosarcinapterin + ADP + phosphate + H(+). It functions in the pathway cofactor biosynthesis; 5,6,7,8-tetrahydrosarcinapterin biosynthesis. In terms of biological role, catalyzes the ATP or GTP-dependent addition of one L-glutamate molecule to tetrahydromethanopterin, producing tetrahydrosarcinapterin. The chain is Tetrahydromethanopterin:alpha-L-glutamate ligase (mptN) from Methanocaldococcus jannaschii (strain ATCC 43067 / DSM 2661 / JAL-1 / JCM 10045 / NBRC 100440) (Methanococcus jannaschii).